The following is a 501-amino-acid chain: Circadian clock oscillator protein KaiC (501 aa).

KaiC domains are found at residues 1–232 and 246–501; these read MQVQ…ITVF and IRIS…REKK. Positions 34, 35, 36, 37, 38, 74, 209, 210, 211, 213, 215, 275, 276, 277, 278, 279, and 280 each coordinate ATP. Residue T38 participates in Mg(2+) binding. Residues T280 and E303 each coordinate Mg(2+). Position 316 (W316) interacts with ATP. A Phosphoserine; by autocatalysis modification is found at S416. T417 is modified (phosphothreonine; by autocatalysis). The ATP site is built by R436, K442, M443, R444, S446, H448, and K450.

This sequence belongs to the KaiC family. In terms of assembly, homohexamer; hexamerization is dependent on ATP-binding. Component of the KaiBC complex. KaiC interacts with SasA, activating its autokinase function and leading to RpaA activation. It depends on Mg(2+) as a cofactor. Post-translationally, phosphorylated on serine and threonine residues by autocatalysis. Has a 4 step phosphorylation cycle; the autokinase acts first on Thr-417, then Ser-416. When Ser-416 is modified KaiC switches to an autophosphatase mode, acting first on phospho-Thr-417 then phospho-Ser-416.

It catalyses the reaction L-seryl-[protein] + ATP = O-phospho-L-seryl-[protein] + ADP + H(+). The enzyme catalyses L-threonyl-[protein] + ATP = O-phospho-L-threonyl-[protein] + ADP + H(+). It carries out the reaction ATP + H2O = ADP + phosphate + H(+). Its function is as follows. Central component of the KaiBC oscillator complex, which constitutes the main circadian regulator in cyanobacteria. Its composition changes during the circadian cycle to control KaiC phosphorylation. Autophosphorylates and has a weak ATPase activity; ATPase activity defines the circadian period. The polypeptide is Circadian clock oscillator protein KaiC (Prochlorococcus marinus (strain SARG / CCMP1375 / SS120)).